The primary structure comprises 523 residues: Galactarate dehydratase (L-threo-forming) (523 aa).

This sequence belongs to the UxaA family. Homodimer. Fe(2+) serves as cofactor.

It catalyses the reaction galactarate = 5-dehydro-4-deoxy-D-glucarate + H2O. It participates in carbohydrate acid metabolism; galactarate degradation; D-glycerate from galactarate: step 1/3. Functionally, catalyzes the dehydration of galactarate to form 5-dehydro-4-deoxy-D-glucarate (5-KDG). This Escherichia coli (strain K12) protein is Galactarate dehydratase (L-threo-forming).